The chain runs to 283 residues: Peroxisomal protein 2 (283 aa).

Positions 281 to 283 match the Peroxisomal target signal 1 (PTS1) motif; the sequence is VKL.

The protein belongs to the PXP2 family.

The protein localises to the peroxisome matrix. Its subcellular location is the cytoplasm. The protein resides in the cytosol. Functionally, probably involved in peroxisome formation or maintenance as well as in amino acid metabolism. This Saccharomyces cerevisiae (strain ATCC 204508 / S288c) (Baker's yeast) protein is Peroxisomal protein 2.